The following is a 21-amino-acid chain: Putative sperm adenylate cyclase (21 aa).

The catalysed reaction is ATP = 3',5'-cyclic AMP + diphosphate. This is Putative sperm adenylate cyclase from Mus musculus (Mouse).